The chain runs to 280 residues: 3,2-trans-enoyl-CoA isomerase (280 aa).

Substrate is bound by residues 68 to 72 and Leu126; that span reads SGADF. Glu158 functions as the Proton donor/acceptor in the catalytic mechanism. The Microbody targeting signal motif lies at 278–280; sequence HRL.

It belongs to the enoyl-CoA hydratase/isomerase family. Homohexamer, dimer of trimers. Interacts with DCI1.

The protein resides in the peroxisome. The catalysed reaction is a (3Z)-enoyl-CoA = a 4-saturated (2E)-enoyl-CoA. It catalyses the reaction a (3E)-enoyl-CoA = a 4-saturated (2E)-enoyl-CoA. It functions in the pathway lipid metabolism; fatty acid beta-oxidation. Its function is as follows. Essential for the beta oxidation of unsaturated fatty acids. This Saccharomyces cerevisiae (strain ATCC 204508 / S288c) (Baker's yeast) protein is 3,2-trans-enoyl-CoA isomerase (ECI1).